The primary structure comprises 369 residues: 2-aminoethylphosphonate--pyruvate transaminase 1 (369 aa).

The residue at position 191 (Lys-191) is an N6-(pyridoxal phosphate)lysine.

It belongs to the class-V pyridoxal-phosphate-dependent aminotransferase family. PhnW subfamily. As to quaternary structure, homodimer. It depends on pyridoxal 5'-phosphate as a cofactor.

The enzyme catalyses (2-aminoethyl)phosphonate + pyruvate = phosphonoacetaldehyde + L-alanine. Functionally, involved in phosphonate degradation. The protein is 2-aminoethylphosphonate--pyruvate transaminase 1 of Burkholderia lata (strain ATCC 17760 / DSM 23089 / LMG 22485 / NCIMB 9086 / R18194 / 383).